We begin with the raw amino-acid sequence, 172 residues long: MORN repeat-containing protein 5 (172 aa).

MORN repeat units follow at residues 8–30 (YIGE…TETK), 31–53 (YIGE…NGSR), and 54–75 (FDAV…DGLQ).

Its subcellular location is the cell projection. The protein resides in the cilium. The protein localises to the flagellum. The protein is MORN repeat-containing protein 5 (MORN5) of Bos taurus (Bovine).